Here is a 427-residue protein sequence, read N- to C-terminus: Glutamyl-tRNA reductase (427 aa).

Residues 49 to 52 (TCNR), S105, 110 to 112 (EPQ), and Q116 each bind substrate. C50 functions as the Nucleophile in the catalytic mechanism. 185–190 (AAGEMN) contributes to the NADP(+) binding site.

This sequence belongs to the glutamyl-tRNA reductase family. As to quaternary structure, homodimer.

It catalyses the reaction (S)-4-amino-5-oxopentanoate + tRNA(Glu) + NADP(+) = L-glutamyl-tRNA(Glu) + NADPH + H(+). It functions in the pathway porphyrin-containing compound metabolism; protoporphyrin-IX biosynthesis; 5-aminolevulinate from L-glutamyl-tRNA(Glu): step 1/2. In terms of biological role, catalyzes the NADPH-dependent reduction of glutamyl-tRNA(Glu) to glutamate 1-semialdehyde (GSA). This chain is Glutamyl-tRNA reductase, found in Acinetobacter baumannii (strain AB307-0294).